The primary structure comprises 343 residues: Zinc finger protein Gfi-1b (343 aa).

Positions 1-20 (MPRSFLVKSKKTHTYNQHRY) are mediates repression of transcription. Residues 1-20 (MPRSFLVKSKKTHTYNQHRY) form an SNAG domain region. The disordered stretch occupies residues 51-77 (STDPTEKQHTPENVITEEARSDPGDPR). A compositionally biased stretch (basic and acidic residues) spans 67–77 (EEARSDPGDPR). C2H2-type zinc fingers lie at residues 176–199 (YHCVKCSKVFSTSHGLEVHVRRSH), 205–227 (FVCNICGKSFGHAVSLEQHLNVH), 233–255 (FECKMCGKTFKRSSTLSTHLLIH), 261–283 (YPCQFCGKRFHQKSDMKKHTYIH), 289–311 (HKCQVCGKAFSQSSNLITHSRKH), and 317–340 (FSCDLCCKGFQRKVDLRRHRENQH).

It localises to the nucleus. Its function is as follows. Essential transcriptional regulator necessary for development and differentiation of erythroid and megakaryocytic lineages. Alters histone methylation by recruiting histone methyltransferase to target genes promoters. Plays a role in heterochromatin formation. The sequence is that of Zinc finger protein Gfi-1b (gfi1b) from Xenopus laevis (African clawed frog).